The sequence spans 396 residues: Interleukin-3 receptor subunit alpha (396 aa).

An N-terminal signal peptide occupies residues 1 to 16 (MAANLWLILGLLASHS). Residues 17 to 331 (SDLAAVREAP…VCPPEVMPVK (315 aa)) are Extracellular-facing. Cystine bridges form between C62/C79, C87/C223, C125/C134, C165/C187, and C245/C323. N-linked (GlcNAc...) asparagine glycosylation occurs at N91. 4 N-linked (GlcNAc...) asparagine glycosylation sites follow: N213, N246, N272, and N283. Residues 312-316 (LSSWS) carry the WSXWS motif motif. The chain crosses the membrane as a helical span at residues 332-355 (TALVTSVATVLGAGLVAAGLLLWW). Residues 356-396 (RKSLLYRLCPPIPRLRLPLAGEMVVWEPALEDCEVTPVTDA) lie on the Cytoplasmic side of the membrane. K357 is covalently cross-linked (Glycyl lysine isopeptide (Lys-Gly) (interchain with G-Cter in ubiquitin)). A Box 1 motif motif is present at residues 363–371 (LCPPIPRLR).

This sequence belongs to the type I cytokine receptor family. Type 5 subfamily. Interacts with IL3. Heterodimer of an alpha and a beta subunit. The beta subunit is common to the IL3, IL5 and GM-CSF receptors. Post-translationally, ubiquitinated at Lys-357 by RNFT2 in response to IL3. Ubiquitination leads ligand-induced degradation by the proteasome. Ubiquitinated by RNF128 via 'Lys-27'-linked polyubiquitination, facilitating its degradation through the lysosomal pathway.

The protein resides in the cell membrane. It localises to the endomembrane system. Cell surface receptor for IL3 expressed on hematopoietic progenitor cells, monocytes and B-lymphocytes that controls the production and differentiation of hematopoietic progenitor cells into lineage-restricted cells. Ligand stimulation rapidly induces hetrodimerization with IL3RB, phosphorylation and enzyme activity of effector proteins such as JAK2 and PI3K that play a role in signaling cell proliferation and differentiation. Activation of JAK2 leads to STAT5-mediated transcriptional program. This Mus musculus (Mouse) protein is Interleukin-3 receptor subunit alpha (Il3ra).